The primary structure comprises 91 residues: Putative pterin-4-alpha-carbinolamine dehydratase (91 aa).

This sequence belongs to the pterin-4-alpha-carbinolamine dehydratase family.

The enzyme catalyses (4aS,6R)-4a-hydroxy-L-erythro-5,6,7,8-tetrahydrobiopterin = (6R)-L-erythro-6,7-dihydrobiopterin + H2O. This is Putative pterin-4-alpha-carbinolamine dehydratase from Halobacterium salinarum (strain ATCC 29341 / DSM 671 / R1).